A 307-amino-acid polypeptide reads, in one-letter code: Serine/threonine-protein phosphatase PP2A-5 catalytic subunit (307 aa).

Asp55, His57, Asp83, and Asn115 together coordinate Mn(2+). His116 functions as the Proton donor in the catalytic mechanism. Positions 165 and 239 each coordinate Mn(2+). Leu307 carries the post-translational modification Leucine methyl ester.

This sequence belongs to the PPP phosphatase family. PP-2A subfamily. In terms of assembly, PP2A consists of a common heterodimeric core enzyme, composed of a 36 kDa catalytic subunit (subunit C) and a 65 kDa constant regulatory subunit (subunit A), that associates with a variety of regulatory subunits such as subunits B (the R2/B/PR55/B55, R3/B''/PR72/PR130/PR59 and R5/B'/B56 families). Also interacts with CHIP and TAF12B. Interacts with B'THETA. Interacts with CLC-A, CLC-B, CLC-C and CLC-G. It depends on Mn(2+) as a cofactor. Post-translationally, reversibly methyl esterified on Leu-307 by leucine carboxyl methyltransferase 1 (LCMT1) and pectin methylesterase 1 (PME1). Carboxyl methylation influences the affinity of the catalytic subunit for the different regulatory subunits, thereby modulating the PP2A holoenzyme's substrate specificity, enzyme activity and cellular localization. In terms of processing, phosphorylation of either threonine (by autophosphorylation-activated protein kinase) or tyrosine results in inactivation of the phosphatase. Auto-dephosphorylation has been suggested as a mechanism for reactivation. Ubiquitinated. CHIP-mediated ubiquitination enhances phosphatase activity after an abiotic stress such as low temperature or darkness.

It localises to the cytoplasm. It is found in the cytosol. Its subcellular location is the peroxisome. It carries out the reaction O-phospho-L-seryl-[protein] + H2O = L-seryl-[protein] + phosphate. It catalyses the reaction O-phospho-L-threonyl-[protein] + H2O = L-threonyl-[protein] + phosphate. In terms of biological role, associates with the serine/threonine-protein phosphatase PP2A regulatory subunits A and B' to positively regulates beta-oxidation of fatty acids and protoauxins in peroxisomes by dephosphorylating peroxisomal beta-oxidation-related proteins. Involved in the positive regulation of salt stress responses. May function by increasing chloride channel activities on vacuolar membranes. The sequence is that of Serine/threonine-protein phosphatase PP2A-5 catalytic subunit from Arabidopsis thaliana (Mouse-ear cress).